We begin with the raw amino-acid sequence, 255 residues long: U2 small nuclear ribonucleoprotein A' (255 aa).

LRR repeat units follow at residues 20-41 (RDRELDLRGYKIPVIENLGATL), 43-64 (QFDAIDFSDNEIRKLDGFPLLR), 65-86 (RLKTLLVNNNRICRIGEGLDQA), and 89-110 (CLTELILTNNSLVELGDLDPLA). One can recognise an LRRCT domain in the interval 123–161 (NPVTNKKHYRLYVIYKVPQVRVLDFQKVKLKERQEAEKM). Position 172 is an N6-acetyllysine; alternate (K172). K172 is covalently cross-linked (Glycyl lysine isopeptide (Lys-Gly) (interchain with G-Cter in SUMO2); alternate). A phosphoserine mark is found at S178 and S197. Residues 179-199 (KTFNPGAGLPTDKKKGGPSAG) are disordered. K221 is covalently cross-linked (Glycyl lysine isopeptide (Lys-Gly) (interchain with G-Cter in SUMO2)). The disordered stretch occupies residues 222-255 (GLLQSGQIPGRERRSGPSDEGEEEIEDDTVTNGS). Phosphoserine is present on residues S236 and S255. The segment covering 240 to 255 (DEGEEEIEDDTVTNGS) has biased composition (acidic residues).

The protein belongs to the U2 small nuclear ribonucleoprotein A family. In terms of assembly, identified in the spliceosome B complex. Identified in the spliceosome C complex. Found in a pre-mRNA splicing complex with SFRS4, SFRS5, SNRNP70, SNRPA1, SRRM1 and SRRM2. Found in a pre-mRNA exonic splicing enhancer (ESE) complex with SNRNP70, SNRPA1, SRRM1 and TRA2B. Contributes to the binding of stem loop IV of U2 snRNA with SNRPB2.

It is found in the nucleus. In terms of biological role, involved in pre-mRNA splicing as component of the spliceosome. Associated with sn-RNP U2, where it contributes to the binding of stem loop IV of U2 snRNA. The polypeptide is U2 small nuclear ribonucleoprotein A' (Snrpa1) (Mus musculus (Mouse)).